The sequence spans 526 residues: Fluoride export protein 1 (526 aa).

Disordered regions lie at residues 1 to 73 and 90 to 149; these read MMTA…RRAS and ASNI…KQAG. The Cytoplasmic segment spans residues 1 to 159; it reads MMTAPSDTEG…VVAKRQKVSR (159 aa). Composition is skewed to basic and acidic residues over residues 21–36 and 103–123; these read SPDR…DHNH and PITR…YLRE. A helical transmembrane segment spans residues 160-180; sequence LATELYTISYLIFFSLLGTLA. At 181 to 194 the chain is on the extracellular side; the sequence is RLGLQALTSAYPQS. The helical transmembrane segment at 195–215 threads the bilayer; the sequence is PIIFPSIWPNFAGCVVMGFLA. Residues 216–260 lie on the Cytoplasmic side of the membrane; the sequence is EDRMLFRPDWGQQQPNPKKDDDDDEEAKDIDPAAAKKAHMALKKT. Residues 223-242 form a disordered region; it reads PDWGQQQPNPKKDDDDDEEA. The chain crosses the membrane as a helical span at residues 261–281; sequence IPLYVGLATGFCGSFTSFSSF. The Extracellular segment spans residues 282–310; that stretch reads IRDIYLALSNDLAAHGSSAAPVSRNGGYS. The chain crosses the membrane as a helical span at residues 311 to 331; that stretch reads FMALLAVTITTISLSLSGLFA. Residues 332-361 lie on the Cytoplasmic side of the membrane; the sequence is GAHLAIAIATLFTRFDLGLPYTFVSRILDR. Residues 362 to 382 form a helical membrane-spanning segment; it reads LIVLLGFGCWLGAVLLSIWPP. Residues 383 to 398 lie on the Extracellular side of the membrane; that stretch reads DRHSAQPEKERWRGTA. The chain crosses the membrane as a helical span at residues 399 to 419; it reads TFALVFAPLGCLTRFYASAHL. Over 420–424 the chain is Cytoplasmic; the sequence is NGRLP. Residues 425-445 traverse the membrane as a helical segment; the sequence is SFPLGTFVVNMLGTAVLGMAW. At 446–452 the chain is on the extracellular side; it reads DLNHVPS. The helical transmembrane segment at 453–473 threads the bilayer; it reads LGGVVGCQVLQGVADGFCGCL. Topologically, residues 474–492 are cytoplasmic; the sequence is TTVSTWVSELAALRRRHAY. The helical transmembrane segment at 493–513 threads the bilayer; sequence VYGGASVGGGLALMVVVMGSL. The Extracellular portion of the chain corresponds to 514-526; sequence RWTEGFGEVKCIS.

The protein belongs to the fluoride channel Fluc/FEX (TC 1.A.43) family.

The protein localises to the cell membrane. It catalyses the reaction fluoride(in) = fluoride(out). Its function is as follows. Fluoride channel required for the rapid expulsion of cytoplasmic fluoride. The chain is Fluoride export protein 1 from Neurospora crassa (strain ATCC 24698 / 74-OR23-1A / CBS 708.71 / DSM 1257 / FGSC 987).